A 470-amino-acid polypeptide reads, in one-letter code: Uronate isomerase (470 aa).

Belongs to the metallo-dependent hydrolases superfamily. Uronate isomerase family.

It catalyses the reaction D-glucuronate = D-fructuronate. It carries out the reaction aldehydo-D-galacturonate = keto-D-tagaturonate. Its pathway is carbohydrate metabolism; pentose and glucuronate interconversion. The protein is Uronate isomerase of Escherichia coli O157:H7 (strain EC4115 / EHEC).